The following is a 186-amino-acid chain: TATA-box-binding protein (186 aa).

A run of 2 repeats spans residues 10–86 (IENV…FDKL) and 101–179 (VQNI…VERL).

The protein belongs to the TBP family.

General factor that plays a role in the activation of archaeal genes transcribed by RNA polymerase. Binds specifically to the TATA box promoter element which lies close to the position of transcription initiation. The sequence is that of TATA-box-binding protein from Haloarcula marismortui (strain ATCC 43049 / DSM 3752 / JCM 8966 / VKM B-1809) (Halobacterium marismortui).